We begin with the raw amino-acid sequence, 1464 residues long: Neuropathy target esterase sws (1464 aa).

At 1–34 (MDVLELLRASATGCYNTIFSEAWHQYVHKQIAAA) the chain is on the lumenal side. Residues 35–55 (VYWYGALFLLGVLLFVWFLYF) traverse the membrane as a helical segment. Residues 56-1464 (KRLARLRLRD…GNTTNNDTKN (1409 aa)) lie on the Cytoplasmic side of the membrane. Position 176–303 (176–303 (IFGHFEKPIF…IRVIQVIMIR (128 aa))) interacts with a nucleoside 3',5'-cyclic phosphate. Disordered stretches follow at residues 329–393 (NKNS…LHYH) and 409–438 (QQQQ…SSPT). Residues 338–367 (TGQTTSNVQSQTSQATQSRPSGTTRTPTSP) are compositionally biased toward low complexity. Positions 409–420 (QQQQSLNSPRRN) are enriched in polar residues. S421 carries the phosphoserine modification. Low complexity predominate over residues 422–438 (TAHVSEAAAASTASSPT). A nucleoside 3',5'-cyclic phosphate-binding positions include 456–586 (ELGL…VVRR) and 575–702 (IVLG…LSHR). Positions 928 to 1094 (LVLGGGGARG…VNNLPGHLWR (167 aa)) constitute a PNPLA domain. Positions 932-937 (GGGARG) match the GXGXXG motif. The GXSXG signature appears at 959–963 (GVSIG). The Nucleophile role is filled by S961. D1081 functions as the Proton acceptor in the catalytic mechanism. Residues 1081-1083 (DGG) carry the DGA/G motif. S1175 bears the Phosphoserine mark. Disordered stretches follow at residues 1352 to 1374 (VDKA…PTPS) and 1400 to 1464 (ATNT…DTKN). The segment covering 1429–1444 (KRTEQDEHELEHEQVV) has biased composition (basic and acidic residues). Over residues 1450 to 1464 (MDKQQGNTTNNDTKN) the composition is skewed to polar residues.

It belongs to the NTE family. In terms of assembly, interacts with Pka-C3; interaction inhibits the catalytic function of Pka-C3 and the esterase activity of sws.

It localises to the endoplasmic reticulum membrane. It catalyses the reaction a 1-acyl-sn-glycero-3-phosphocholine + H2O = sn-glycerol 3-phosphocholine + a fatty acid + H(+). In terms of biological role, phospholipase B that deacylates intracellular phosphatidylcholine (PtdCho), generating glycerophosphocholine (GroPtdCho). This deacylation occurs at both sn-2 and sn-1 positions of PtdCho. Its specific chemical modification by certain organophosphorus (OP) compounds leads to distal axonopathy. Plays a role in the signaling mechanism between neurons and glia that regulates glia wrapping during development of the adult brain. Essential for membrane lipid homeostasis and cell survival in both neurons and glia of the adult brain. This chain is Neuropathy target esterase sws, found in Drosophila grimshawi (Hawaiian fruit fly).